The following is a 92-amino-acid chain: Small ribosomal subunit protein uS19 (92 aa).

The protein belongs to the universal ribosomal protein uS19 family.

Functionally, protein S19 forms a complex with S13 that binds strongly to the 16S ribosomal RNA. The protein is Small ribosomal subunit protein uS19 of Magnetococcus marinus (strain ATCC BAA-1437 / JCM 17883 / MC-1).